Reading from the N-terminus, the 154-residue chain is SsrA-binding protein (154 aa).

Residues Lys-130 to Ala-154 form a disordered region. Over residues Asp-133–Ala-154 the composition is skewed to basic and acidic residues.

It belongs to the SmpB family.

It localises to the cytoplasm. Functionally, required for rescue of stalled ribosomes mediated by trans-translation. Binds to transfer-messenger RNA (tmRNA), required for stable association of tmRNA with ribosomes. tmRNA and SmpB together mimic tRNA shape, replacing the anticodon stem-loop with SmpB. tmRNA is encoded by the ssrA gene; the 2 termini fold to resemble tRNA(Ala) and it encodes a 'tag peptide', a short internal open reading frame. During trans-translation Ala-aminoacylated tmRNA acts like a tRNA, entering the A-site of stalled ribosomes, displacing the stalled mRNA. The ribosome then switches to translate the ORF on the tmRNA; the nascent peptide is terminated with the 'tag peptide' encoded by the tmRNA and targeted for degradation. The ribosome is freed to recommence translation, which seems to be the essential function of trans-translation. The sequence is that of SsrA-binding protein from Synechococcus elongatus (strain ATCC 33912 / PCC 7942 / FACHB-805) (Anacystis nidulans R2).